Here is a 249-residue protein sequence, read N- to C-terminus: Ribosomal RNA small subunit methyltransferase G (249 aa).

Residues glycine 88, phenylalanine 93, 111–113 (DAT), 139–140 (AE), and arginine 158 contribute to the S-adenosyl-L-methionine site. The cysteines at positions 164 and 249 are disulfide-linked. An RNA binding region spans residues 245 to 246 (RH).

It belongs to the methyltransferase superfamily. RNA methyltransferase RsmG family.

It localises to the cytoplasm. It catalyses the reaction guanosine(527) in 16S rRNA + S-adenosyl-L-methionine = N(7)-methylguanosine(527) in 16S rRNA + S-adenosyl-L-homocysteine. Specifically methylates the N7 position of guanine in position 527 of 16S rRNA. Shows a marked preference for deproteinized 16S rRNA as substrate and is completely inactive with native 30S subunits as substrate. This chain is Ribosomal RNA small subunit methyltransferase G, found in Thermus thermophilus (strain ATCC 27634 / DSM 579 / HB8).